The primary structure comprises 250 residues: Formylaminopyrimidine transport permease protein ThiX (250 aa).

The next 6 membrane-spanning stretches (helical) occupy residues 5-25 (YQALEPTLFFLMLMVIWEISA), 62-82 (IISIGLALSIVLGILLSLLMF), 94-114 (LLVASQTIPVIALAPIFVLWF), 115-135 (GYSIWSKVAVTVLLTFFPITV), 172-192 (LPSFLTGLRIAVPLAVIGAAV), and 216-236 (PGVFAPIFILSLLGILGFAAI). Residues 56-237 (LPATLAIISI…LGILGFAAIK (182 aa)) form the ABC transmembrane type-1 domain.

Belongs to the binding-protein-dependent transport system permease family. The complex is likely composed of an ATP-binding protein (ThiZ), a transmembrane protein (ThiX) and a solute-binding protein (ThiY).

It localises to the cell membrane. Its pathway is cofactor biosynthesis; thiamine diphosphate biosynthesis. Its function is as follows. Participates in a thiamine pyrimidine salvage pathway as part of the ABC transporter complex ThiXYZ involved in the import of thiamine degradation products such as the formylaminopyrimidine N-formyl-4-amino-5-aminomethyl-2-methylpyrimidine (FAMP). Is probably responsible for the translocation of the substrate across the membrane. The sequence is that of Formylaminopyrimidine transport permease protein ThiX from Halalkalibacterium halodurans (strain ATCC BAA-125 / DSM 18197 / FERM 7344 / JCM 9153 / C-125) (Bacillus halodurans).